The chain runs to 684 residues: DNA gyrase subunit B, novobiocin-sensitive (684 aa).

Residues 1–22 are disordered; it reads MADSGNPNENTPSVATGENGEV. A novobiocin-binding region spans residues 154–302; the sequence is VKTDGYRWTQ…RMLSVEIAMQ (149 aa). The Toprim domain occupies 463–577; sequence CEIFIVEGDS…AGHVYLSRPP (115 aa). Residues glutamate 469, aspartate 542, and aspartate 544 each coordinate Mg(2+).

This sequence belongs to the type II topoisomerase GyrB family. As to quaternary structure, heterotetramer, composed of two GyrA and two GyrB chains. In the heterotetramer, GyrA contains the active site tyrosine that forms a transient covalent intermediate with DNA, while GyrB binds cofactors and catalyzes ATP hydrolysis. Requires Mg(2+) as cofactor. Mn(2+) is required as a cofactor. The cofactor is Ca(2+).

It is found in the cytoplasm. The catalysed reaction is ATP-dependent breakage, passage and rejoining of double-stranded DNA.. Functionally, a type II topoisomerase that negatively supercoils closed circular double-stranded (ds) DNA in an ATP-dependent manner to modulate DNA topology and maintain chromosomes in an underwound state. Negative supercoiling favors strand separation, and DNA replication, transcription, recombination and repair, all of which involve strand separation. Also able to catalyze the interconversion of other topological isomers of dsDNA rings, including catenanes and knotted rings. Type II topoisomerases break and join 2 DNA strands simultaneously in an ATP-dependent manner. This is DNA gyrase subunit B, novobiocin-sensitive from Streptomyces niveus (Streptomyces spheroides).